The chain runs to 87 residues: Small ribosomal subunit protein uS12m (87 aa).

Belongs to the universal ribosomal protein uS12 family.

The protein resides in the mitochondrion matrix. The protein localises to the kinetoplast. Protein S12 is involved in the translation initiation step. The chain is Small ribosomal subunit protein uS12m (RPS12) from Trypanoplasma borreli.